A 355-amino-acid chain; its full sequence is Anthranilate phosphoribosyltransferase (355 aa).

Residues glycine 99, 102 to 103, threonine 107, 109 to 112, 127 to 135, and serine 139 contribute to the 5-phospho-alpha-D-ribose 1-diphosphate site; these read GD, NIST, and KHGNRSVSS. Residue glycine 99 participates in anthranilate binding. Serine 111 provides a ligand contact to Mg(2+). Asparagine 130 contacts anthranilate. Residue arginine 185 participates in anthranilate binding. The Mg(2+) site is built by aspartate 243 and glutamate 244.

The protein belongs to the anthranilate phosphoribosyltransferase family. As to quaternary structure, homodimer. Mg(2+) serves as cofactor.

The catalysed reaction is N-(5-phospho-beta-D-ribosyl)anthranilate + diphosphate = 5-phospho-alpha-D-ribose 1-diphosphate + anthranilate. The protein operates within amino-acid biosynthesis; L-tryptophan biosynthesis; L-tryptophan from chorismate: step 2/5. Its function is as follows. Catalyzes the transfer of the phosphoribosyl group of 5-phosphorylribose-1-pyrophosphate (PRPP) to anthranilate to yield N-(5'-phosphoribosyl)-anthranilate (PRA). The sequence is that of Anthranilate phosphoribosyltransferase from Pseudoalteromonas translucida (strain TAC 125).